We begin with the raw amino-acid sequence, 401 residues long: Argininosuccinate synthase (401 aa).

8–16 (AYSGGLDTS) lines the ATP pocket. Tyr87 contacts L-citrulline. Gly117 lines the ATP pocket. Thr119, Asn123, and Asp124 together coordinate L-aspartate. Asn123 lines the L-citrulline pocket. Residues Arg127, Ser175, Glu259, and Tyr271 each coordinate L-citrulline.

Belongs to the argininosuccinate synthase family. Type 1 subfamily. Homotetramer.

It is found in the cytoplasm. It carries out the reaction L-citrulline + L-aspartate + ATP = 2-(N(omega)-L-arginino)succinate + AMP + diphosphate + H(+). The protein operates within amino-acid biosynthesis; L-arginine biosynthesis; L-arginine from L-ornithine and carbamoyl phosphate: step 2/3. The chain is Argininosuccinate synthase from Corynebacterium efficiens (strain DSM 44549 / YS-314 / AJ 12310 / JCM 11189 / NBRC 100395).